Here is a 275-residue protein sequence, read N- to C-terminus: PE family protein PE8 (275 aa).

The PE domain occupies 5–93 (KTVPEELTAA…AGTYGVTESL (89 aa)).

The protein belongs to the mycobacterial PE family. Forms a heterodimer with PPE15. The dimer forms a 1:1:1 heterotrimeric complex with EspG5.

It is found in the secreted. It localises to the cell wall. Functionally, promotes the intracellular survival of recombinant Mycobacterium within macrophages by regulating host inflammatory cytokines production and inhibiting cell late apoptosis. This is PE family protein PE8 from Mycobacterium tuberculosis (strain ATCC 25618 / H37Rv).